Reading from the N-terminus, the 242-residue chain is 3-deoxy-manno-octulosonate cytidylyltransferase (242 aa).

It belongs to the KdsB family.

The protein resides in the cytoplasm. It catalyses the reaction 3-deoxy-alpha-D-manno-oct-2-ulosonate + CTP = CMP-3-deoxy-beta-D-manno-octulosonate + diphosphate. It participates in nucleotide-sugar biosynthesis; CMP-3-deoxy-D-manno-octulosonate biosynthesis; CMP-3-deoxy-D-manno-octulosonate from 3-deoxy-D-manno-octulosonate and CTP: step 1/1. It functions in the pathway bacterial outer membrane biogenesis; lipopolysaccharide biosynthesis. Functionally, activates KDO (a required 8-carbon sugar) for incorporation into bacterial lipopolysaccharide in Gram-negative bacteria. The chain is 3-deoxy-manno-octulosonate cytidylyltransferase from Anaeromyxobacter dehalogenans (strain 2CP-1 / ATCC BAA-258).